A 200-amino-acid chain; its full sequence is dITP/XTP pyrophosphatase (200 aa).

8–13 serves as a coordination point for substrate; sequence THNPNK. Mg(2+) contacts are provided by E41 and D71. Residue D71 is the Proton acceptor of the active site. Substrate contacts are provided by residues T72, 153 to 156, K176, and 181 to 182; these read FGYD and HR.

This sequence belongs to the HAM1 NTPase family. In terms of assembly, homodimer. Mg(2+) is required as a cofactor.

The enzyme catalyses XTP + H2O = XMP + diphosphate + H(+). The catalysed reaction is dITP + H2O = dIMP + diphosphate + H(+). It carries out the reaction ITP + H2O = IMP + diphosphate + H(+). In terms of biological role, pyrophosphatase that catalyzes the hydrolysis of nucleoside triphosphates to their monophosphate derivatives, with a high preference for the non-canonical purine nucleotides XTP (xanthosine triphosphate), dITP (deoxyinosine triphosphate) and ITP. Seems to function as a house-cleaning enzyme that removes non-canonical purine nucleotides from the nucleotide pool, thus preventing their incorporation into DNA/RNA and avoiding chromosomal lesions. This Caldanaerobacter subterraneus subsp. tengcongensis (strain DSM 15242 / JCM 11007 / NBRC 100824 / MB4) (Thermoanaerobacter tengcongensis) protein is dITP/XTP pyrophosphatase.